The sequence spans 411 residues: Immunity-related GTPase family M protein (411 aa).

Residues methionine 1–serine 21 are disordered. The IRG-type G domain maps to isoleucine 77–aspartate 253. GTP-binding positions include aspartate 86–serine 93, threonine 111–arginine 115, and lysine 193–aspartate 195. Phosphoserine is present on serine 204. GTP is bound at residue serine 234–leucine 236. Residue lysine 272 forms a Glycyl lysine isopeptide (Lys-Gly) (interchain with G-Cter in ubiquitin) linkage. Residues lysine 352 to histidine 376 are alpha-K amphipathic helix.

Belongs to the TRAFAC class dynamin-like GTPase superfamily. IRG family. Interacts with ULK1; promoting the coassembly of ULK1 and BECN1. Interacts with BECN1; enhancing BECN1-interacting partners and influencing the composition of the BECN1 complex. Interacts with ATG16L1. Interacts with NOD2; promoting Irgm 'Lys-63'-linked polyubiquitination, which is required for interactions with the core autophagy factors. Interacts with STX17; promoting STX17 recruitment to autophagosomes. Interacts with ATG8 proteins (GABARAP, GABARAPL1, GABARAPL2, MAP1LC3A, MAP1LC3B and MAP1LC3C); promoting STX17 recruitment to autophagosomes. Interacts with TFEB; promoting association between TFEB and PPP3CB and TFEB dephosphorylation. Interacts with PPP3CB; promoting association between TFEB and PPP3CB and TFEB dephosphorylation. Interacts with NLRP3; preventing NLRP3 inflammasome assembly and promoting SQSTM1/p62-dependent autophagic degradation of NLRP3. Interacts with CGAS; promoting SQSTM1/p62-dependent autophagic degradation of CGAS. Interacts with RIGI/RIG-I; promoting SQSTM1/p62-dependent autophagic degradation of RIGI/RIG-I. Interacts with NOD1; promoting SQSTM1/p62-dependent autophagic degradation of RIGI/RIG-I. Interacts with NOD2; promoting SQSTM1/p62-dependent autophagic degradation of RIGI/RIG-I. Interacts with RIPK2; promoting SQSTM1/p62-dependent autophagic degradation of RIGI/RIG-I. Interacts with PIK3CA. In terms of processing, palmitoylated on C-terminal Cys residues. Palmitoylation, together with the alpha-K amphipathic helix, which binds phosphatidylinositol, mediate binding to membranes. Ubiquitinated via 'Lys-63'-linked polyubiquitination in a NOD2-dependent process. 'Lys-63'-linked polyubiquitination is required for interactions with the core autophagy factors. Ubiquitination at Lys-272 by the DCX(WDR77) complex, also named CLR4(WDR77) complex, in intestinal cells, leading to its degradation by the proteasome.

The protein resides in the golgi apparatus membrane. Its subcellular location is the cell membrane. It localises to the cytoplasmic vesicle. It is found in the phagosome membrane. The protein localises to the autophagosome membrane. The protein resides in the lysosome membrane. Its subcellular location is the late endosome membrane. It localises to the mitochondrion membrane. It is found in the cell projection. The protein localises to the phagocytic cup. The catalysed reaction is GTP + H2O = GDP + phosphate + H(+). Functionally, immunity-related GTPase that plays important roles in innate immunity and inflammatory response. Acts as a dynamin-like protein that binds to intracellular membranes and promotes remodeling and trafficking of those membranes. Required for clearance of acute protozoan and bacterial infections by interacting with autophagy and lysosome regulatory proteins, thereby promoting the fusion of phagosomes with lysosomes for efficient degradation of cargo including microbes. Regulates selective autophagy, including xenophagy and mitophagy, both directly and indirectly. Directly regulates autophagy by acting as a molecular adapter that promotes the coassembly of the core autophagy machinery to mediate antimicrobial defense: Irgm (1) activates AMPK, which in turn phosphorylates ULK1 and BECN1 to induce autophagy, (2) promotes the coassembly of ULK1 and BECN1, enhancing BECN1-interacting partners and (3) influences the composition of the BECN1 complex, by competing with the negative regulators BCL2 and RUBCN, to trigger autophagy. Also activates autophagy by promoting recruitment of STX17 to autophagosomes. In collaboration with ATG8 proteins, regulate lysosomal biogenesis, a fundamental process for any autophagic pathway, by promoting TFEB dephosphorylation. Also modulates autophagy by assisting with autophagosome formation and preventing lysosomal deacidification. Regulates autophagy by affecting mitochondrial fusion and fission. Also involved in M1 macrophage activation for the production of proinflammatory cytokines. While activating autophagy, acts as a key negative regulator of the inflammatory and interferon responses both by (1) promoting mitophagy and (2) mediating autophagy-dependent degradation of effectors of the inflammatory response. Promotes degradation of damaged and IFNG/IFN-gamma-stressed mitochondria via mitophagy, preventing cytosolic release of ligands that activate inflammation. Negatively regulates interferon-signaling in hematopoietic stem cells, preserving hematopoietic stem cell number and function. Promotes expansion of activated CD4(+) T-cells by inhibiting IFNG/IFN-gamma signaling, thereby preventing Ifng-mediated cell death of CD4(+) T-cells. Acts as a suppressor of inflammation by promoting recruitment of inflammation effectors, such as CGAS, RIGI/RIG-I and NLRP3, to autophagosome membranes, leading to their SQSTM1/p62-dependent autophagic degradation. Also directly inhibits assembly of the NLRP3 inflammasome by preventing the association between NLRP3 and PYCARD. Acts as a negative regulator of antiviral innate immune response by suppressing the RIPK2-dependent pro-inflammatory response: mediates recruitment of RIPosomes, composed of RIPK2 and NOD1 or NOD2, to autophagosome membranes, promoting their SQSTM1/p62-dependent autophagic degradation. This is Immunity-related GTPase family M protein from Rattus norvegicus (Rat).